Here is a 159-residue protein sequence, read N- to C-terminus: MGLYTFENEFTSEIPPPRLFKAFVLDADNLIPKIAPQAIKHAEILEGNGGPGTIKKITFGEGSQYGYVKHRVDSIDEASYSYAYTLIEGDALTDTIEKISYEAKLVASGSGSTIKSISHYHTKGDIEIKEEHVKAGKEKAHGLFKLIESYLKDHPDAYN.

It belongs to the BetVI family.

This chain is Major allergen Pyr c 1 (PYRC1), found in Pyrus communis (Pear).